The sequence spans 261 residues: Large ribosomal subunit protein uL10m (261 aa).

The transit peptide at 1 to 28 (MAAAVAGMLRGGLLPQAGRLPTLQTVRY) directs the protein to the mitochondrion. The tract at residues 242-261 (EKDSVMSANGKPDPDTVPDS) is disordered.

It belongs to the universal ribosomal protein uL10 family. Component of the mitochondrial large ribosomal subunit (mt-LSU). Mature mammalian 55S mitochondrial ribosomes consist of a small (28S) and a large (39S) subunit. The 28S small subunit contains a 12S ribosomal RNA (12S mt-rRNA) and 30 different proteins. The 39S large subunit contains a 16S rRNA (16S mt-rRNA), a copy of mitochondrial valine transfer RNA (mt-tRNA(Val)), which plays an integral structural role, and 52 different proteins. uL10m contributes a single cysteine residue to a zinc-binding site with mL66.

The protein resides in the mitochondrion. The protein is Large ribosomal subunit protein uL10m (MRPL10) of Homo sapiens (Human).